A 1216-amino-acid chain; its full sequence is MGVMAYPFLFCLLLVHFGLGAIGASREAPSRPDPPRERTLRAKQHAQQPARASASDPSAPWSRSTDGTILAQKLAEEVPMDVASYLYTGDSHKLKRANCSSRYELAGLPGKSPALASSHPSLHGALDTLTHATNFLNMMLQSNKSREQNLQDDLEWYQALVRSLLEGEPSISRAAITFSTESLSAPAPQVFLQATREESRILLQDLSSSAHHLANATLETEWFHGLRRKWRTHLHRRGSNQGPRGLGHSWRRRDGLSGDKSHVKWSPPYLECENGSYKPGWLVTLSAAFYGLQPNLVPEFRGVMKVDINLQKVDIDQCSSDGWFSGTHKCHLNNSECMPIKGLGFVLGAYQCICKAGFYHPRDFSFNNFQRRGPDHHFVESAKDVSEEVHVCLPCSEGCPYCADDSPCFVQEDKYLRLAIISFQALCMLLDFLSMLVVYRFRKAKSIRASGLILLETILFGSLLLYFPVVILYFEPSTFRCILLRWVRLLGFATVYGTVTLKLHRVLKVFLSRTAQRIPYMTGGRVMRMLAVILLVVFWFLVGWTSSVCQNLERHISLIGQGRTSDHLIFSMCLVERWDYMTAAAEFLFLLWGVYLCYAVRTVPSAFHEPRYMAVAVHNELIISAIFHTIRFVLASRLQSDWMLMLYFAHTHLTVTVTIGLLLIPKFSHSSNNPRDDIATEAYEDELDMGRSGSYLNSSINSAWSEHSLDPEDIRDELKKLYAQLEIYKRKKMITNNPHLQKKRCSKKGLGRSIMRRITEIPETVSRQCSKEDKDGGEHGSAKGSSAGRKNPQETAGGSGKPKEESLRSRVFSLKKSHSTYEHVREQPGGPGSPPAQSREEEEATDNSVLGSPVGANRPRPLQEDSQAVSTESVPLVCKSASAHNLSSEKKPGPTRTSVLQKSLSVIASAKEKTLGLAGKTQAACVEERAKAQKALPRERETNRKYSNSDNAETQDSAPPNSSHSEEPRKPQKLGIMKQQRANPTTANSDLSPGATHMKDNFDIGEVCPWEIYDLAPGPGPLESKVQKHVSIAASEMERNPTFSLKEKSHPKPKAADLCQQSNPKSVDKAEVCPWESQGQSLFEEEKYLMSKTQVPLGRAQGENSGQHCATGVCAGQCEELPPKAVASKVENENLNQLGEQEKKTSSSERNVPDSHNSSNNFQPPLMSRAEVCPWEFETPDKPNAERSVAFPASSALSANKIAGPRNEEVRLARKV.

An N-terminal signal peptide occupies residues 1–23 (MGVMAYPFLFCLLLVHFGLGAIG). Residues 24 to 417 (ASREAPSRPD…CFVQEDKYLR (394 aa)) lie on the Extracellular side of the membrane. The disordered stretch occupies residues 25–65 (SREAPSRPDPPRERTLRAKQHAQQPARASASDPSAPWSRST). A compositionally biased stretch (basic and acidic residues) spans 28-40 (APSRPDPPRERTL). Residues 46-64 (AQQPARASASDPSAPWSRS) show a composition bias toward low complexity. The interval 85–281 (YLYTGDSHKL…CENGSYKPGW (197 aa)) is cache-like region. N-linked (GlcNAc...) asparagine glycosylation is found at asparagine 98 and asparagine 143. A disulfide bridge links cysteine 99 with cysteine 272. The glycine site is built by serine 172 and arginine 173. The N-linked (GlcNAc...) asparagine glycan is linked to asparagine 215. A glycine-binding site is contributed by glutamate 271. An N-linked (GlcNAc...) asparagine glycan is attached at asparagine 274. Position 307 (aspartate 307) interacts with glycine. N-linked (GlcNAc...) asparagine glycosylation is present at asparagine 333. Residues 418-439 (LAIISFQALCMLLDFLSMLVVY) traverse the membrane as a helical segment. The Cytoplasmic portion of the chain corresponds to 440–451 (RFRKAKSIRASG). The helical transmembrane segment at 452-474 (LILLETILFGSLLLYFPVVILYF) threads the bilayer. The Extracellular portion of the chain corresponds to 475-478 (EPST). Residues 479 to 501 (FRCILLRWVRLLGFATVYGTVTL) traverse the membrane as a helical segment. An intrachain disulfide couples cysteine 481 to cysteine 573. The Cytoplasmic segment spans residues 502–525 (KLHRVLKVFLSRTAQRIPYMTGGR). A helical membrane pass occupies residues 526–547 (VMRMLAVILLVVFWFLVGWTSS). At 548–576 (VCQNLERHISLIGQGRTSDHLIFSMCLVE) the chain is on the extracellular side. Residues 577 to 597 (RWDYMTAAAEFLFLLWGVYLC) traverse the membrane as a helical segment. Residues 598-611 (YAVRTVPSAFHEPR) lie on the Cytoplasmic side of the membrane. The chain crosses the membrane as a helical span at residues 612–633 (YMAVAVHNELIISAIFHTIRFV). At 634–642 (LASRLQSDW) the chain is on the extracellular side. The helical transmembrane segment at 643–664 (MLMLYFAHTHLTVTVTIGLLLI) threads the bilayer. The Cytoplasmic segment spans residues 665 to 1216 (PKFSHSSNNP…NEEVRLARKV (552 aa)). Residues serine 694, serine 705, and serine 708 each carry the phosphoserine modification. Disordered stretches follow at residues 757 to 875 (RITE…ESVP) and 911 to 1000 (KEKT…HMKD). Residues 769–781 (CSKEDKDGGEHGS) show a composition bias toward basic and acidic residues. A Glycyl lysine isopeptide (Lys-Gly) (interchain with G-Cter in ubiquitin) cross-link involves residue lysine 774. Over residues 864 to 873 (EDSQAVSTES) the composition is skewed to polar residues. Serine 866 is modified (phosphoserine). Basic and acidic residues predominate over residues 926–944 (VEERAKAQKALPRERETNR). Composition is skewed to polar residues over residues 945–963 (KYSNSDNAETQDSAPPNSS) and 980–991 (QRANPTTANSDL). A Phosphoserine modification is found at serine 947. The VCPWE motif 1 motif lies at 1007 to 1011 (VCPWE). Residues 1038-1072 (ERNPTFSLKEKSHPKPKAADLCQQSNPKSVDKAEV) form a disordered region. A Phosphoserine modification is found at serine 1066. Residues 1072-1076 (VCPWE) carry the VCPWE motif 2 motif. Serine 1081 is modified (phosphoserine). Residues 1128-1167 (SKVENENLNQLGEQEKKTSSSERNVPDSHNSSNNFQPPLM) are disordered. Over residues 1140–1153 (EQEKKTSSSERNVP) the composition is skewed to basic and acidic residues. Positions 1154 to 1163 (DSHNSSNNFQ) are enriched in polar residues. A VCPWE motif 3 motif is present at residues 1172-1176 (VCPWE).

Belongs to the G-protein coupled receptor 3 family. In terms of assembly, homodimer. Associates with the RGS7-GNB5 complex, promoting its localization to the cell membrane and regulating its GTPase activator activity. Interacts (via VCPWE motifs) with GNAO1. Interacts with GPC4. Interacts with EGFLAM.

Its subcellular location is the cell membrane. The protein localises to the postsynaptic cell membrane. The protein resides in the presynaptic cell membrane. It is found in the nucleus. Its function is as follows. Metabotropic receptor for glycine that controls synapse formation and function in the brain. Acts as an atypical G-protein coupled receptor that recruits and regulates the RGS7-GNB5 complex instead of activating G proteins. In absence of glycine ligand, promotes the GTPase activator activity of RGS7, increasing the GTPase activity of G protein alpha subunits, thereby driving them into their inactive GDP-bound form. Glycine-binding changes the conformation of the intracellular surface, inhibiting the GTPase activator activity of the RGS7-GNB5 complex, promoting G protein alpha subunits into their active GTP-bound form and regulating cAMP levels. Also able to bind taurine, a compound closely related to glycine, but with a two-fold lower affinity. Glycine receptor-dependent regulation of cAMP controls key ion channels, kinases and neurotrophic factors involved in neuronal excitability and synaptic transmission. Plays a pivotal role in regulating mood and cognition via its ability to regulate neuronal excitability in L2/L3 pyramidal neurons of the prefrontal cortex. Also involved in spatial learning by regulating hippocampal CA1 neuronal excitability. Acts as a synaptic organizer in the hippocampus, required for proper mossy fiber-CA3 neurocircuitry establishment, structure and function: induces presynaptic differentiation in contacting axons via its interaction with GPC4. In addition to glycine, may also act as a receptor for osteocalcin (BGLAP) hormone: osteocalcin-binding initiates a signaling response that prevents neuronal apoptosis in the hippocampus and regulates the synthesis of neurotransmitters. This is Metabotropic glycine receptor (GPR158) from Bos taurus (Bovine).